Here is a 274-residue protein sequence, read N- to C-terminus: Probable S-adenosylmethionine-dependent methyltransferase MT3114 (274 aa).

Residues 1-24 are disordered; the sequence is MCAFVPHVPRHSRGDNPPSASTAS.

The protein belongs to the methyltransferase superfamily.

Functionally, probable S-adenosylmethionine-dependent methyltransferase required for the 6-O-methylation of the polysaccharide backbone of 6-O-methylglucosyl lipopolysaccharides (MGLP). In Mycobacterium tuberculosis (strain CDC 1551 / Oshkosh), this protein is Probable S-adenosylmethionine-dependent methyltransferase MT3114.